The chain runs to 828 residues: Glycerol-3-phosphate acyltransferase (828 aa).

Residues 310–315 (HRSHID) carry the HXXXXD motif motif.

The protein belongs to the GPAT/DAPAT family.

It is found in the cell inner membrane. The catalysed reaction is sn-glycerol 3-phosphate + an acyl-CoA = a 1-acyl-sn-glycero-3-phosphate + CoA. It participates in phospholipid metabolism; CDP-diacylglycerol biosynthesis; CDP-diacylglycerol from sn-glycerol 3-phosphate: step 1/3. In Pseudomonas putida (strain ATCC 47054 / DSM 6125 / CFBP 8728 / NCIMB 11950 / KT2440), this protein is Glycerol-3-phosphate acyltransferase.